The sequence spans 335 residues: Beta-ketoacyl-[acyl-carrier-protein] synthase III 1 (335 aa).

Active-site residues include cysteine 116 and histidine 256. Residues 257-261 (QANQR) are ACP-binding. Residue asparagine 286 is part of the active site.

This sequence belongs to the thiolase-like superfamily. FabH family. Homodimer.

It is found in the cytoplasm. The enzyme catalyses malonyl-[ACP] + acetyl-CoA + H(+) = 3-oxobutanoyl-[ACP] + CO2 + CoA. The protein operates within lipid metabolism; fatty acid biosynthesis. Functionally, catalyzes the condensation reaction of fatty acid synthesis by the addition to an acyl acceptor of two carbons from malonyl-ACP. Catalyzes the first condensation reaction which initiates fatty acid synthesis and may therefore play a role in governing the total rate of fatty acid production. Possesses both acetoacetyl-ACP synthase and acetyl transacylase activities. Its substrate specificity determines the biosynthesis of branched-chain and/or straight-chain of fatty acids. The protein is Beta-ketoacyl-[acyl-carrier-protein] synthase III 1 of Bacteroides thetaiotaomicron (strain ATCC 29148 / DSM 2079 / JCM 5827 / CCUG 10774 / NCTC 10582 / VPI-5482 / E50).